The chain runs to 550 residues: MFCVQCEQTIRTPVGNGCSYAQGMCGKTAETSDLQDLLVAVLQGLSAWALKARELDIIDHDVDNFAPRAFFSTLTNVNFDSQRIIGYAQEAITLRESLAVRCRLHDATATVDHPMAALQLAGNDIPTLLQQAEDFALDSDKAIVGDDVHGLRMLNLYGLKGAAAYMEHAHVLGQYDNAIYAEYHAFMAWLGTQPTDVDTLLNNAMGIGKMNFNVMAILDHGETDAYGHPQPTSVNVRPIAGKAILISGHDLKDLRMLLEQTEGTGVNIYTHGEMLPAHGYPELKKFKHLAGNYGSGWQNQQTEFAKFPGAIVMTSNCIIDPNVGNYGDRIWTRSIVGWPGVNHLEGDDFSSVIEQAQGLAGFPYSEIEHMITVGFGRETLLSAADTVIDLVAQKKLRHVFLVGGCDGSREERSYFTDFTLSVPQDCLIMTLACGKYRFNKLDFGTLEGLPRLLDVGQCNDAYAAIILAVKLAEKLGCGVNDLPLSLVLSWFEQKAIVILLTLLSLGVKNIYTGPTAPGFLTDNLLAILNDKFGMRAITTVEQDMNTILAA.

Residues cysteine 3, cysteine 6, cysteine 18, and cysteine 25 each contribute to the [2Fe-2S] cluster site. Histidine 249, glutamate 273, cysteine 317, cysteine 405, cysteine 433, cysteine 458, glutamate 492, and lysine 494 together coordinate hybrid [4Fe-2O-2S] cluster. Cysteine 405 bears the Cysteine persulfide mark.

It belongs to the HCP family. [2Fe-2S] cluster is required as a cofactor. It depends on hybrid [4Fe-2O-2S] cluster as a cofactor.

It is found in the cytoplasm. The catalysed reaction is A + NH4(+) + H2O = hydroxylamine + AH2 + H(+). Catalyzes the reduction of hydroxylamine to form NH(3) and H(2)O. This chain is Hydroxylamine reductase, found in Pectobacterium atrosepticum (strain SCRI 1043 / ATCC BAA-672) (Erwinia carotovora subsp. atroseptica).